The sequence spans 159 residues: Mesogenin-1 (159 aa).

Residues 79-101 form a disordered region; the sequence is PGQARLPKGTKVRMSAQRRRKAS. The span at 86-100 shows a compositional bias: basic residues; that stretch reads KGTKVRMSAQRRRKA. A bHLH domain is found at 95–149; it reads QRRRKASEREKLRMRTLADALHTLRNYLPPAYSQRGQPLTKIQTLKCTIKYISEL.

Its subcellular location is the nucleus. Its function is as follows. Involved in specifying the paraxial, but not dorsal, mesoderm. May regulate the expression of T-box transcription factors required for mesoderm formation and differentiation. This is Mesogenin-1 (MSGN1) from Gallus gallus (Chicken).